Consider the following 127-residue polypeptide: Small ribosomal subunit protein uS13 (127 aa).

The segment at 92 to 127 (HRQGLPVRGQRTRTNARTRRGRRLTVAGKKKAPSKK) is disordered. Positions 101-127 (QRTRTNARTRRGRRLTVAGKKKAPSKK) are enriched in basic residues.

Belongs to the universal ribosomal protein uS13 family. Part of the 30S ribosomal subunit. Forms a loose heterodimer with protein S19. Forms two bridges to the 50S subunit in the 70S ribosome.

Located at the top of the head of the 30S subunit, it contacts several helices of the 16S rRNA. In the 70S ribosome it contacts the 23S rRNA (bridge B1a) and protein L5 of the 50S subunit (bridge B1b), connecting the 2 subunits; these bridges are implicated in subunit movement. Contacts the tRNAs in the A and P-sites. In Gloeothece citriformis (strain PCC 7424) (Cyanothece sp. (strain PCC 7424)), this protein is Small ribosomal subunit protein uS13.